The chain runs to 491 residues: Delayed-rectifier potassium channel regulatory subunit KCNS3 (491 aa).

Over 1 to 182 the chain is Cytoplasmic; that stretch reads MVFGEFFHRP…IRMENPAYCL (182 aa). Residues 183–204 traverse the membrane as a helical segment; it reads SAKLIAISSLSVVLASIVAMCV. At 205-220 the chain is on the extracellular side; it reads HSMSEFQNEDGEVDDP. A helical membrane pass occupies residues 221-243; the sequence is VLEGVEIACIAWFTGELAVRLVA. Topologically, residues 244-254 are cytoplasmic; the sequence is APCQKKFWKNP. Residues 255 to 275 form a helical membrane-spanning segment; that stretch reads LNIIDFVSIIPFYATLAVDTK. Topologically, residues 276 to 285 are extracellular; sequence EEESEDIENM. The chain crosses the membrane as a helical; Voltage-sensor span at residues 286–306; it reads GKVVQILRLMRIFRILKLARH. Over 307 to 321 the chain is Cytoplasmic; the sequence is SVGLRSLGATLRHSY. A helical membrane pass occupies residues 322 to 343; the sequence is HEVGLLLLFLSVGISIFSVLIY. The Extracellular segment spans residues 344–357; the sequence is SVEKDDHTSSLTSI. An intramembrane region (helical) is located at residues 358–369; sequence PICWWWATISMT. Residues 370 to 375 carry the Selectivity filter motif; sequence TVGYGD. An intramembrane segment occupies 370–377; that stretch reads TVGYGDTH. At 378 to 384 the chain is on the extracellular side; that stretch reads PVTLAGK. The helical transmembrane segment at 385–413 threads the bilayer; sequence LIASTCIICGILVVALPITIIFNKFSKYY. The Cytoplasmic segment spans residues 414-491; it reads QKQKDIDVDQ…TASLENCTAK (78 aa).

It belongs to the potassium channel family. S (TC 1.A.1.2) subfamily. Kv9.3/KCNS3 sub-subfamily. Heterotetramer with KCNB1. Does not form homomultimers.

The protein localises to the cell membrane. Functionally, potassium channel regulatory subunit that modulates the delayed rectifier potassium channel activity of KCNB1 by namely slowing down the deactivation and inactivation time constants. While it does not form functional channel on its own, it can form functional heterotetrameric channels with KCNB1. The protein is Delayed-rectifier potassium channel regulatory subunit KCNS3 of Oryctolagus cuniculus (Rabbit).